The sequence spans 599 residues: Elongation factor 4 (599 aa).

Residues 5 to 187 (SHIRNFSIIA…RLVHTIPAPE (183 aa)) form the tr-type G domain. GTP-binding positions include 17 to 22 (DHGKST) and 134 to 137 (NKMD).

This sequence belongs to the TRAFAC class translation factor GTPase superfamily. Classic translation factor GTPase family. LepA subfamily.

The protein resides in the cell inner membrane. It catalyses the reaction GTP + H2O = GDP + phosphate + H(+). Required for accurate and efficient protein synthesis under certain stress conditions. May act as a fidelity factor of the translation reaction, by catalyzing a one-codon backward translocation of tRNAs on improperly translocated ribosomes. Back-translocation proceeds from a post-translocation (POST) complex to a pre-translocation (PRE) complex, thus giving elongation factor G a second chance to translocate the tRNAs correctly. Binds to ribosomes in a GTP-dependent manner. The sequence is that of Elongation factor 4 from Pseudomonas putida (strain ATCC 47054 / DSM 6125 / CFBP 8728 / NCIMB 11950 / KT2440).